Here is a 708-residue protein sequence, read N- to C-terminus: Phosphate acetyltransferase (708 aa).

The phosphate acetyltransferase stretch occupies residues 388 to 708; it reads EFCYNLKLLS…TIALTSIQSE (321 aa).

It in the N-terminal section; belongs to the CobB/CobQ family. In the C-terminal section; belongs to the phosphate acetyltransferase and butyryltransferase family. As to quaternary structure, homohexamer.

It is found in the cytoplasm. The enzyme catalyses acetyl-CoA + phosphate = acetyl phosphate + CoA. It functions in the pathway metabolic intermediate biosynthesis; acetyl-CoA biosynthesis; acetyl-CoA from acetate: step 2/2. Involved in acetate metabolism. In Buchnera aphidicola subsp. Acyrthosiphon pisum (strain APS) (Acyrthosiphon pisum symbiotic bacterium), this protein is Phosphate acetyltransferase (pta).